Here is a 244-residue protein sequence, read N- to C-terminus: MKNVKLTLEYDGTNYCGWQKQKNVVTVQEEVEKIIGEITGEKIDVIGCSRTDSGVHAKAYTCNFKTNTVIPPEKFYLVLNSVLPDDIVALNSEEVPMDFHSRFDNKGKTYSYTILNRLQRAAIDRNYVYQYGHKLNCDLMREATKYILGTHDFTSFKSTGSKVKSNIRTIYEARIVEDENKVIFYVTGDGFLYNMVRIIVGTLLEVGEEKITPLNVKTIVESKDRTKAGRVVPAKGLCLEKVMY.

Asp-52 (nucleophile) is an active-site residue. Tyr-110 is a binding site for substrate.

The protein belongs to the tRNA pseudouridine synthase TruA family. As to quaternary structure, homodimer.

It catalyses the reaction uridine(38/39/40) in tRNA = pseudouridine(38/39/40) in tRNA. Formation of pseudouridine at positions 38, 39 and 40 in the anticodon stem and loop of transfer RNAs. The polypeptide is tRNA pseudouridine synthase A (Clostridium acetobutylicum (strain ATCC 824 / DSM 792 / JCM 1419 / IAM 19013 / LMG 5710 / NBRC 13948 / NRRL B-527 / VKM B-1787 / 2291 / W)).